We begin with the raw amino-acid sequence, 137 residues long: ATP synthase epsilon chain (137 aa).

This sequence belongs to the ATPase epsilon chain family. F-type ATPases have 2 components, CF(1) - the catalytic core - and CF(0) - the membrane proton channel. CF(1) has five subunits: alpha(3), beta(3), gamma(1), delta(1), epsilon(1). CF(0) has three main subunits: a, b and c.

Its subcellular location is the cellular thylakoid membrane. In terms of biological role, produces ATP from ADP in the presence of a proton gradient across the membrane. This Nostoc punctiforme (strain ATCC 29133 / PCC 73102) protein is ATP synthase epsilon chain.